The sequence spans 213 residues: Thiopurine S-methyltransferase (213 aa).

S-adenosyl-L-methionine-binding residues include W10, L45, E66, and R121.

The protein belongs to the class I-like SAM-binding methyltransferase superfamily. TPMT family.

It localises to the cytoplasm. It catalyses the reaction S-adenosyl-L-methionine + a thiopurine = S-adenosyl-L-homocysteine + a thiopurine S-methylether.. The sequence is that of Thiopurine S-methyltransferase from Aliivibrio fischeri (strain MJ11) (Vibrio fischeri).